A 341-amino-acid polypeptide reads, in one-letter code: Glycerol-3-phosphate dehydrogenase [NAD(P)+] (341 aa).

4 residues coordinate NADPH: Ser-14, Phe-15, Arg-35, and Lys-108. Positions 108 and 136 each coordinate sn-glycerol 3-phosphate. Ala-140 is an NADPH binding site. Sn-glycerol 3-phosphate-binding residues include Lys-191, Asp-244, Ser-254, Arg-255, and Asn-256. Lys-191 functions as the Proton acceptor in the catalytic mechanism. Arg-255 lines the NADPH pocket. Positions 279 and 281 each coordinate NADPH.

The protein belongs to the NAD-dependent glycerol-3-phosphate dehydrogenase family.

The protein resides in the cytoplasm. The enzyme catalyses sn-glycerol 3-phosphate + NAD(+) = dihydroxyacetone phosphate + NADH + H(+). It carries out the reaction sn-glycerol 3-phosphate + NADP(+) = dihydroxyacetone phosphate + NADPH + H(+). It functions in the pathway membrane lipid metabolism; glycerophospholipid metabolism. Its function is as follows. Catalyzes the reduction of the glycolytic intermediate dihydroxyacetone phosphate (DHAP) to sn-glycerol 3-phosphate (G3P), the key precursor for phospholipid synthesis. The sequence is that of Glycerol-3-phosphate dehydrogenase [NAD(P)+] from Pseudomonas syringae pv. syringae (strain B728a).